Reading from the N-terminus, the 84-residue chain is MEPTKDETHAIVEFVDVLLRDGAVIQADVIVTVADIPLIGISLRAAIAGMTTMTEYGLFEEWDAAHRQQSEAFTTSPTADRRED.

The tract at residues 1–25 (MEPTKDETHAIVEFVDVLLRDGAVI) is interacts with GvpL1. Positions 5–21 (KDETHAIVEFVDVLLRD) are alpha helix 1. Beta-strand stretches follow at residues 27 to 29 (ADV) and 41 to 43 (ISL). The short motif at 44–48 (RAAIA) is the Conserved in GvpJ1/2 but not GvpA element. Alpha helix stretches follow at residues 46–56 (AIAGMTTMTEY) and 62–84 (WDAA…RRED).

The protein belongs to the gas vesicle GvpA family. In terms of assembly, gvpF to GvpM interact with each other in vitro, and may form multi-subunit complex(es). Might interact with GvpA1.

Its subcellular location is the gas vesicle. In terms of biological role, proteins GvpF to GvpM might be involved in nucleating gas vesicle formation. A minor component of the gas vesicle. Gas vesicles are hollow, gas filled proteinaceous nanostructures found in several microbial planktonic microorganisms. They allow positioning of halobacteria at the optimal depth for growth in the poorly aerated, shallow brine pools of their habitat. Expression of a 9.5 kb p-vac DNA fragment containing 2 divergently transcribed regions (gvpD-gvpE-gvpF-gvpG-gvpH-gvpI-gvpJ-gvpK-gvpL-gvpM and gvpA-gvpC-gvpN-gvpO) allows H.volcanii to produce gas vesicles. All site-directed mutagenesis is tested in H.volcanii. A minimal gas vesicle can be made in H.volcanii by gvpA1-gvpO1 plus gvpF1-gvpG1-gvpJ1-gvpK1-gvpL1-gvpM1; lack of enough GvpJ1 prevents formation. A similar region restores gas vesicle production in H.halobium without the p-vac locus, but it still has the c-vac locus. The chain is Gas vesicle protein M1 (gvpM11) from Halobacterium salinarum (strain ATCC 700922 / JCM 11081 / NRC-1) (Halobacterium halobium).